We begin with the raw amino-acid sequence, 361 residues long: MLYWLTQLLQGQYHAFRVFQYLTFRSILASLTALIVGLLCGPLMIRWLRGLQIGQMVRSDGPQTHLSKAGTPTMGGVLILLAITVSCLLWCDLRQTSLWLVLLVTLANGLVGWVDDYRKLVLKNSKGLPGRWKYFWQSVIALVAVSYLYWNASLPVHTQLTVPFFKTVTWDLGVFFPVLAYFVIVGSSNAVNLTDGLDGLAIMPIVMVAGALGVFAYASSNAVYSNYLGIPYVPNTGELTIFCSSIVGAGLGFLWYNSYPAQVFMGDVGSLALGAALGIVAIVVRQELVLLIMGGLFVIETLSVILQVGYFKYSGGKRLFRMAPLHHHFELKGWSEPKVIVRFWIITVVFVLCGLATLKLR.

Helical transmembrane passes span 27–47, 70–90, 97–117, 134–154, 167–187, 199–219, 236–256, 263–283, 288–308, and 338–358; these read ILASLTALIVGLLCGPLMIRW, GTPTMGGVLILLAITVSCLLW, SLWLVLLVTLANGLVGWVDDY, YFWQSVIALVAVSYLYWNASL, TVTWDLGVFFPVLAYFVIVGS, GLAIMPIVMVAGALGVFAYAS, TGELTIFCSSIVGAGLGFLWY, VFMGDVGSLALGAALGIVAIV, LVLLIMGGLFVIETLSVILQV, and KVIVRFWIITVVFVLCGLATL.

It belongs to the glycosyltransferase 4 family. MraY subfamily. It depends on Mg(2+) as a cofactor.

Its subcellular location is the cell inner membrane. It catalyses the reaction UDP-N-acetyl-alpha-D-muramoyl-L-alanyl-gamma-D-glutamyl-meso-2,6-diaminopimeloyl-D-alanyl-D-alanine + di-trans,octa-cis-undecaprenyl phosphate = di-trans,octa-cis-undecaprenyl diphospho-N-acetyl-alpha-D-muramoyl-L-alanyl-D-glutamyl-meso-2,6-diaminopimeloyl-D-alanyl-D-alanine + UMP. The protein operates within cell wall biogenesis; peptidoglycan biosynthesis. Functionally, catalyzes the initial step of the lipid cycle reactions in the biosynthesis of the cell wall peptidoglycan: transfers peptidoglycan precursor phospho-MurNAc-pentapeptide from UDP-MurNAc-pentapeptide onto the lipid carrier undecaprenyl phosphate, yielding undecaprenyl-pyrophosphoryl-MurNAc-pentapeptide, known as lipid I. In Legionella pneumophila (strain Paris), this protein is Phospho-N-acetylmuramoyl-pentapeptide-transferase.